Reading from the N-terminus, the 227-residue chain is Cytochrome c oxidase subunit 2 (227 aa).

Topologically, residues 1 to 14 (MAYPFQLGLQDATS) are mitochondrial intermembrane. Residues 15–45 (PIMEELLHFHDHTLMIVFLISSLVLYIITLM) form a helical membrane-spanning segment. Residues 46–59 (LTTKLTHTSTMDAQ) lie on the Mitochondrial matrix side of the membrane. A helical transmembrane segment spans residues 60 to 87 (EVETVWTILPAIILVLIALPSLRILYMM). Topologically, residues 88 to 227 (DEINNPSLTV…YFETWSALMV (140 aa)) are mitochondrial intermembrane. Cu cation contacts are provided by histidine 161, cysteine 196, glutamate 198, cysteine 200, histidine 204, and methionine 207. Glutamate 198 lines the Mg(2+) pocket. Tyrosine 218 carries the phosphotyrosine modification.

This sequence belongs to the cytochrome c oxidase subunit 2 family. In terms of assembly, component of the cytochrome c oxidase (complex IV, CIV), a multisubunit enzyme composed of 14 subunits. The complex is composed of a catalytic core of 3 subunits MT-CO1, MT-CO2 and MT-CO3, encoded in the mitochondrial DNA, and 11 supernumerary subunits COX4I, COX5A, COX5B, COX6A, COX6B, COX6C, COX7A, COX7B, COX7C, COX8 and NDUFA4, which are encoded in the nuclear genome. The complex exists as a monomer or a dimer and forms supercomplexes (SCs) in the inner mitochondrial membrane with NADH-ubiquinone oxidoreductase (complex I, CI) and ubiquinol-cytochrome c oxidoreductase (cytochrome b-c1 complex, complex III, CIII), resulting in different assemblies (supercomplex SCI(1)III(2)IV(1) and megacomplex MCI(2)III(2)IV(2)). Found in a complex with TMEM177, COA6, COX18, COX20, SCO1 and SCO2. Interacts with TMEM177 in a COX20-dependent manner. Interacts with COX20. Interacts with COX16. It depends on Cu cation as a cofactor.

It is found in the mitochondrion inner membrane. It catalyses the reaction 4 Fe(II)-[cytochrome c] + O2 + 8 H(+)(in) = 4 Fe(III)-[cytochrome c] + 2 H2O + 4 H(+)(out). In terms of biological role, component of the cytochrome c oxidase, the last enzyme in the mitochondrial electron transport chain which drives oxidative phosphorylation. The respiratory chain contains 3 multisubunit complexes succinate dehydrogenase (complex II, CII), ubiquinol-cytochrome c oxidoreductase (cytochrome b-c1 complex, complex III, CIII) and cytochrome c oxidase (complex IV, CIV), that cooperate to transfer electrons derived from NADH and succinate to molecular oxygen, creating an electrochemical gradient over the inner membrane that drives transmembrane transport and the ATP synthase. Cytochrome c oxidase is the component of the respiratory chain that catalyzes the reduction of oxygen to water. Electrons originating from reduced cytochrome c in the intermembrane space (IMS) are transferred via the dinuclear copper A center (CU(A)) of subunit 2 and heme A of subunit 1 to the active site in subunit 1, a binuclear center (BNC) formed by heme A3 and copper B (CU(B)). The BNC reduces molecular oxygen to 2 water molecules using 4 electrons from cytochrome c in the IMS and 4 protons from the mitochondrial matrix. This Vulpes zerda (Fennec fox) protein is Cytochrome c oxidase subunit 2 (MT-CO2).